A 141-amino-acid chain; its full sequence is Nucleoside triphosphatase NudI (141 aa).

Residues 1–141 (MRQRTIVCPL…RKTLSLKGLL (141 aa)) form the Nudix hydrolase domain. Positions 38 to 59 (GGVEPGERIEDALRREIREELG) match the Nudix box motif.

This sequence belongs to the Nudix hydrolase family. NudI subfamily. In terms of assembly, monomer. Mg(2+) serves as cofactor.

The enzyme catalyses a ribonucleoside 5'-triphosphate + H2O = a ribonucleoside 5'-phosphate + diphosphate + H(+). It carries out the reaction a 2'-deoxyribonucleoside 5'-triphosphate + H2O = a 2'-deoxyribonucleoside 5'-phosphate + diphosphate + H(+). The catalysed reaction is dUTP + H2O = dUMP + diphosphate + H(+). It catalyses the reaction dTTP + H2O = dTMP + diphosphate + H(+). The enzyme catalyses dCTP + H2O = dCMP + diphosphate + H(+). Functionally, catalyzes the hydrolysis of nucleoside triphosphates, with a preference for pyrimidine deoxynucleoside triphosphates (dUTP, dTTP and dCTP). The sequence is that of Nucleoside triphosphatase NudI from Escherichia fergusonii (strain ATCC 35469 / DSM 13698 / CCUG 18766 / IAM 14443 / JCM 21226 / LMG 7866 / NBRC 102419 / NCTC 12128 / CDC 0568-73).